A 603-amino-acid polypeptide reads, in one-letter code: Bifunctional 3-dehydroquinate dehydratase/shikimate dehydrogenase, chloroplastic (603 aa).

Positions 1–10 (MAASSTNARL) are enriched in polar residues. Positions 1–22 (MAASSTNARLTNPPRLLSKPRL) are disordered. Residues 1 to 66 (MAASSTNARL…VVFSDQRRRR (66 aa)) constitute a chloroplast transit peptide. Residues 13 to 22 (PPRLLSKPRL) are compositionally biased toward low complexity. Positions 96 to 313 (ICAPVMADSI…QPTIKDLLDL (218 aa)) are 3-dehydroquinate dehydratase. Residues Glu-124, Arg-126, and Arg-155 each coordinate 3-dehydroshikimate. The Proton acceptor; for 3-dehydroquinate dehydratase activity role is filled by His-214. Positions 241, 279, 300, and 304 each coordinate 3-dehydroshikimate. The active-site Schiff-base intermediate with substrate; for 3-dehydroquinate dehydratase activity is Lys-241. Positions 328 to 558 (IIGKPVSHSK…VYTPRITRLL (231 aa)) are shikimate dehydrogenase. 6 residues coordinate shikimate: Ser-336, Ser-338, Thr-381, Lys-385, Asn-406, and Asp-423. Lys-385 (for shikimate dehydrogenase activity) is an active-site residue. Catalysis depends on Asp-423, which acts as the For shikimate dehydrogenase activity. NADP(+) contacts are provided by Ala-461, Gly-463, Ala-464, Asn-483, Thr-485, Arg-488, Met-525, and Ala-548. Shikimate is bound at residue Tyr-550. Residue Gly-571 coordinates NADP(+). Gln-578 and Gln-582 together coordinate shikimate.

The protein in the N-terminal section; belongs to the type-I 3-dehydroquinase family. In the C-terminal section; belongs to the shikimate dehydrogenase family. Monomer.

It localises to the plastid. The protein localises to the chloroplast. It carries out the reaction 3-dehydroquinate = 3-dehydroshikimate + H2O. The catalysed reaction is shikimate + NADP(+) = 3-dehydroshikimate + NADPH + H(+). It participates in metabolic intermediate biosynthesis; chorismate biosynthesis; chorismate from D-erythrose 4-phosphate and phosphoenolpyruvate: step 3/7. It functions in the pathway metabolic intermediate biosynthesis; chorismate biosynthesis; chorismate from D-erythrose 4-phosphate and phosphoenolpyruvate: step 4/7. Its function is as follows. Bifunctional dehydroquinate dehydratase-shikimate dehydrogenase enzyme that catalyzes two steps in the chorismate biosynthesis pathway. This is Bifunctional 3-dehydroquinate dehydratase/shikimate dehydrogenase, chloroplastic from Arabidopsis thaliana (Mouse-ear cress).